We begin with the raw amino-acid sequence, 264 residues long: 3-methyl-2-oxobutanoate hydroxymethyltransferase (264 aa).

Mg(2+) is bound by residues Asp45 and Asp84. 3-methyl-2-oxobutanoate is bound by residues 45–46, Asp84, and Lys112; that span reads DS. Residue Glu114 coordinates Mg(2+). The active-site Proton acceptor is the Glu181.

It belongs to the PanB family. In terms of assembly, homodecamer; pentamer of dimers. Mg(2+) is required as a cofactor.

It is found in the cytoplasm. The catalysed reaction is 3-methyl-2-oxobutanoate + (6R)-5,10-methylene-5,6,7,8-tetrahydrofolate + H2O = 2-dehydropantoate + (6S)-5,6,7,8-tetrahydrofolate. Its pathway is cofactor biosynthesis; (R)-pantothenate biosynthesis; (R)-pantoate from 3-methyl-2-oxobutanoate: step 1/2. Its function is as follows. Catalyzes the reversible reaction in which hydroxymethyl group from 5,10-methylenetetrahydrofolate is transferred onto alpha-ketoisovalerate to form ketopantoate. The sequence is that of 3-methyl-2-oxobutanoate hydroxymethyltransferase from Shewanella amazonensis (strain ATCC BAA-1098 / SB2B).